The chain runs to 2378 residues: Dimodular nonribosomal peptide synthase (2378 aa).

2 consecutive Carrier domains span residues 961–1036 (APRT…DLAQ) and 2036–2111 (GPRT…EMGS). Residues S996 and S2071 each carry the O-(pantetheine 4'-phosphoryl)serine modification.

The protein belongs to the ATP-dependent AMP-binding enzyme family. It depends on pantetheine 4'-phosphate as a cofactor.

The enzyme catalyses holo-[peptidyl-carrier protein] + L-threonine + ATP = L-threonyl-[peptidyl-carrier protein] + AMP + diphosphate. It catalyses the reaction holo-[peptidyl-carrier protein] + glycine + ATP = glycyl-[peptidyl-carrier protein] + AMP + diphosphate. Its pathway is siderophore biosynthesis; bacillibactin biosynthesis. Functionally, specifically adenylates L-threonine and, to a lesser extent, glycine and covalently loads both amino acids onto their corresponding peptidyl carrier domains. This chain is Dimodular nonribosomal peptide synthase (dhbF), found in Bacillus subtilis (strain 168).